The primary structure comprises 410 residues: D-amino acid dehydrogenase (410 aa).

Position 9 to 14 (9 to 14 (GGGIVG)) interacts with FAD.

The protein belongs to the DadA oxidoreductase family. FAD serves as cofactor.

It is found in the cell inner membrane. It carries out the reaction a D-alpha-amino acid + a quinone + H2O = a 2-oxocarboxylate + a quinol + NH4(+). Catalyzes the oxidative deamination of D-amino acids. Has broad substrate specificity; is mostly active on D-proline, and to a lesser extent, on several other D-amino acids such as D-alanine, D-phenylalanine and D-serine. Mediates electron transport from D-proline to coenzyme Q1 in vitro, and is involved in the electron transport chain from D-proline to the c-type cytochrome in vivo. This Helicobacter pylori (strain J99 / ATCC 700824) (Campylobacter pylori J99) protein is D-amino acid dehydrogenase.